A 207-amino-acid polypeptide reads, in one-letter code: MSAQIAPAEQVCYVHCNFCNTILAVSVPGNSMLNIVTVRCGHCTNLLSVNLRGLMHSAPALQDHHHHHLQESGLSGCFRDQSGYPEFGFSAASSSSKLRLPPAAAAMVSYSQQNQQLEQALHARPPEKRQRVPSAYNRFIKEEIRRIKANNPDISHREAFSTAAKNWAHYPNIHFGLSPGHEGGKKLVDVDPIPTAPSSKKIQGFYS.

The C4-type zinc-finger motif lies at 16-43; it reads CNFCNTILAVSVPGNSMLNIVTVRCGHC.

It belongs to the YABBY family. In terms of tissue distribution, expressed in leaf blades, leaf sheaths and flowers.

The protein resides in the nucleus. This Oryza sativa subsp. japonica (Rice) protein is Protein YABBY 6 (YAB6).